A 602-amino-acid polypeptide reads, in one-letter code: MHKYRTHNCNELQISDVETEVKLSGWVHRRRDHGNLVFIDLRDHYGITQIVFTDQNPQLMEDASRLRYESVITVRGTVVARSEDTINNTLPTGHVEVLAVEFSVESAADTLPFVINTEKDAPEESRLKHRFLDLRREKLHNNIILRSQIISHIRHLMTASGFTEFQTPILTASSPEGARDFLVPSRMHPGKFYALPQAPQQFKQLLMVSGFDRYFQIAPCFRDEDARADRSPGEFYQLDVEMSFVTQEDVFSTIEPVMYDLFTKFTDKKVSETPFVCIPYNESMLKYGSDKPDLRNPIIIADVTEIFRDSDFTIFRENIKKGSIVRAIPAPKAAALPRSFFDKMIEFAISEGAGGLGYIQFSETGEAKGPVVKFLSPQQLESLKATASISNGDAVFFASDKKEKAAKLAGKVRIRLGEELDLLEKDCFKFCWITDFPFYELNEETGKIDFSHNPFSMPQGGIDALEQAKTTEELLELTAYQYDIVCNGIELSSGAIRNHKPEIMYKAFSIAGYSEEEVDKRFGGMIRAFKFGAPPHGGIAPGIDRIVMLLAEATNIREIIAFPLNQQAEDLLMNAPSYVEDKALKELSIMLSPSARKNAEKE.

Residue E176 participates in L-aspartate binding. Residues 200 to 203 (QQFK) are aspartate. Residues R222 and H452 each contribute to the L-aspartate site. 222 to 224 (RDE) is a binding site for ATP. E490 is an ATP binding site. R497 contacts L-aspartate. Residue 542–545 (GIDR) participates in ATP binding.

It belongs to the class-II aminoacyl-tRNA synthetase family. Type 1 subfamily. As to quaternary structure, homodimer.

The protein localises to the cytoplasm. It carries out the reaction tRNA(Asx) + L-aspartate + ATP = L-aspartyl-tRNA(Asx) + AMP + diphosphate. Aspartyl-tRNA synthetase with relaxed tRNA specificity since it is able to aspartylate not only its cognate tRNA(Asp) but also tRNA(Asn). Reaction proceeds in two steps: L-aspartate is first activated by ATP to form Asp-AMP and then transferred to the acceptor end of tRNA(Asp/Asn). The protein is Aspartate--tRNA(Asp/Asn) ligase of Rickettsia conorii (strain ATCC VR-613 / Malish 7).